A 141-amino-acid chain; its full sequence is Short-chain diamines transporter (141 aa).

4 consecutive transmembrane segments (helical) span residues 16–36 (VILLVIIAIALSFIFDVPLEV), 39–59 (TLGIVMAVTSVFWNMIFNHFF), 76–96 (ILHAIGFEGGLMLVTIPMVAY), and 103–123 (WQAIVLDFGLTMCILVYTFIF).

The protein belongs to the proteobacterial antimicrobial compound efflux (PACE) (TC 2.A.117) family.

It localises to the cell inner membrane. Functionally, mediates the efflux of short-chain diamines when energized by an electrochemical gradient. Involved in resistance to the synthetic biocide chlorhexidine, a widely used antiseptic and disinfectant in both hospital and community settings. Interacts directly with chlorhexidine and mediates its efflux via an energy-dependent mechanism. This Acinetobacter baylyi (strain ATCC 33305 / BD413 / ADP1) protein is Short-chain diamines transporter.